The following is a 306-amino-acid chain: D-alanine--D-alanine ligase (306 aa).

Residues 101–303 form the ATP-grasp domain; the sequence is KLLWQGAGLP…FSQLVVRILE (203 aa). ATP is bound at residue 134 to 189; that stretch reads ISALGLPLIVKPSREGSSVGMTKVVEENALQGALSLAFQHDDEILIEKWLCGPEFT. Mg(2+) contacts are provided by Asp-257, Glu-270, and Asn-272.

The protein belongs to the D-alanine--D-alanine ligase family. Mg(2+) serves as cofactor. Mn(2+) is required as a cofactor.

It localises to the cytoplasm. It carries out the reaction 2 D-alanine + ATP = D-alanyl-D-alanine + ADP + phosphate + H(+). The protein operates within cell wall biogenesis; peptidoglycan biosynthesis. Functionally, cell wall formation. The polypeptide is D-alanine--D-alanine ligase (Salmonella paratyphi A (strain ATCC 9150 / SARB42)).